Here is a 1210-residue protein sequence, read N- to C-terminus: AF4/FMR2 family member 1 (1210 aa).

Disordered regions lie at residues Met1 to Tyr45, Thr73 to Pro314, Ser366 to Val957, and Thr1098 to Ser1119. Composition is skewed to basic and acidic residues over residues Asn9 to Pro35 and His78 to Leu87. Phosphoserine occurs at positions 199, 206, and 212. The segment covering His215 to Lys238 has biased composition (polar residues). The residue at position 220 (Thr220) is a Phosphothreonine. The segment covering Ser245–Pro259 has biased composition (basic and acidic residues). Pro residues predominate over residues Ala267–Leu279. Positions His394 to Thr419 are enriched in polar residues. The span at Leu423–Gln439 shows a compositional bias: acidic residues. Residues Glu442 to Ala453 show a composition bias toward pro residues. Low complexity predominate over residues Pro454–Glu472. Residues Ser473–Pro497 are compositionally biased toward acidic residues. Basic and acidic residues predominate over residues Glu536–Gly546. Residues Gln586 to Thr602 show a composition bias toward polar residues. Phosphoserine is present on Ser588. Position 681 is an N6-acetyllysine (Lys681). Positions Pro688–Glu699 are enriched in basic and acidic residues. The residue at position 697 (Thr697) is a Phosphothreonine. Polar residues predominate over residues Thr707–Cys724. The segment covering Glu732 to Lys747 has biased composition (basic and acidic residues). Ser750 is modified (phosphoserine). Position 755 is a phosphothreonine (Thr755). Residues Gly816–Lys834 are compositionally biased toward basic and acidic residues. Residues Ser871–Pro880 are compositionally biased toward low complexity. Residues Asn906 to Ser932 are compositionally biased toward basic and acidic residues. Over residues Pro1110 to Ser1119 the composition is skewed to low complexity.

This sequence belongs to the AF4 family. In terms of assembly, component of the super elongation complex (SEC), at least composed of EAF1, EAF2, CDK9, MLLT3/AF9, AFF (AFF1 or AFF4), the P-TEFb complex and ELL (ELL, ELL2 or ELL3).

Its subcellular location is the nucleus. This is AF4/FMR2 family member 1 (AFF1) from Homo sapiens (Human).